A 370-amino-acid chain; its full sequence is Peptide chain release factor 1 (370 aa).

Gln-237 carries the N5-methylglutamine modification. Positions 286–296 (ERQRSARDATR) are enriched in basic and acidic residues. The tract at residues 286–310 (ERQRSARDATRKSQVGTGDRSEKIR) is disordered.

Belongs to the prokaryotic/mitochondrial release factor family. In terms of processing, methylated by PrmC. Methylation increases the termination efficiency of RF1.

The protein localises to the cytoplasm. Peptide chain release factor 1 directs the termination of translation in response to the peptide chain termination codons UAG and UAA. The protein is Peptide chain release factor 1 of Anaeromyxobacter dehalogenans (strain 2CP-C).